We begin with the raw amino-acid sequence, 110 residues long: Large ribosomal subunit protein uL22 (110 aa).

This sequence belongs to the universal ribosomal protein uL22 family. In terms of assembly, part of the 50S ribosomal subunit.

This protein binds specifically to 23S rRNA; its binding is stimulated by other ribosomal proteins, e.g. L4, L17, and L20. It is important during the early stages of 50S assembly. It makes multiple contacts with different domains of the 23S rRNA in the assembled 50S subunit and ribosome. In terms of biological role, the globular domain of the protein is located near the polypeptide exit tunnel on the outside of the subunit, while an extended beta-hairpin is found that lines the wall of the exit tunnel in the center of the 70S ribosome. The sequence is that of Large ribosomal subunit protein uL22 from Vibrio parahaemolyticus serotype O3:K6 (strain RIMD 2210633).